Reading from the N-terminus, the 214-residue chain is SINYXNMSNHHMLSTFNLLPVGSNISTWWNFGSMLMTCLALQTITGFFLAIHYTANINLAFSSIMHITRDIPYGWIMQNLHAIGASMFFVCIYIHIARGIYYGSYLNKEVWLSGVILLTALMATAFFGYVLPWGQMSFWAATVITNLLTAIPYLGTMLTTWLWGGFSINDPTLTRFFALHFVLPFIIISMSSIHIILLHNEGSSNPLGTNSDID.

A run of 4 helical transmembrane segments spans residues 31-51, 75-96, 111-131, and 176-196; these read FGSMLMTCLALQTITGFFLAI, WIMQNLHAIGASMFFVCIYIHI, WLSGVILLTALMATAFFGYVL, and FFALHFVLPFIIISMSSIHII. The heme b site is built by histidine 81 and histidine 95. Residues histidine 180 and histidine 194 each coordinate heme b. Histidine 199 lines the a ubiquinone pocket.

It belongs to the cytochrome b family. As to quaternary structure, the cytochrome bc1 complex contains 3 respiratory subunits (MT-CYB, CYC1 and UQCRFS1), 2 core proteins (UQCRC1 and UQCRC2) and probably 6 low-molecular weight proteins. It depends on heme b as a cofactor.

The protein resides in the mitochondrion inner membrane. Its function is as follows. Component of the ubiquinol-cytochrome c reductase complex (complex III or cytochrome b-c1 complex) that is part of the mitochondrial respiratory chain. The b-c1 complex mediates electron transfer from ubiquinol to cytochrome c. Contributes to the generation of a proton gradient across the mitochondrial membrane that is then used for ATP synthesis. The protein is Cytochrome b (MT-CYB) of Atractaspis micropholis (Mole viper).